The following is a 455-amino-acid chain: Ribosomal protein uS12 methylthiotransferase RimO (455 aa).

Positions 21–131 (GKVGFISLGC…VVGAVHQYVP (111 aa)) constitute an MTTase N-terminal domain. [4Fe-4S] cluster contacts are provided by Cys-30, Cys-66, Cys-95, Cys-164, Cys-168, and Cys-171. One can recognise a Radical SAM core domain in the interval 150 to 387 (LTPRHYAYLK…MAKQAEISAA (238 aa)). A TRAM domain is found at 390–455 (QAKIGRTIDV…DEHDLWARLI (66 aa)).

The protein belongs to the methylthiotransferase family. RimO subfamily. [4Fe-4S] cluster serves as cofactor.

The protein localises to the cytoplasm. It carries out the reaction L-aspartate(89)-[ribosomal protein uS12]-hydrogen + (sulfur carrier)-SH + AH2 + 2 S-adenosyl-L-methionine = 3-methylsulfanyl-L-aspartate(89)-[ribosomal protein uS12]-hydrogen + (sulfur carrier)-H + 5'-deoxyadenosine + L-methionine + A + S-adenosyl-L-homocysteine + 2 H(+). Functionally, catalyzes the methylthiolation of an aspartic acid residue of ribosomal protein uS12. The polypeptide is Ribosomal protein uS12 methylthiotransferase RimO (Marinobacter nauticus (strain ATCC 700491 / DSM 11845 / VT8) (Marinobacter aquaeolei)).